The following is a 284-amino-acid chain: tRNA N(3)-cytidine methyltransferase METTL6 (284 aa).

The S-adenosyl-L-methionine site is built by Trp-45 and Tyr-49. Residues Tyr-49, His-61, Glu-85, Gly-87, Asp-110, Asp-136, Leu-137, and Ile-157 each contribute to the S-adenosyl-L-homocysteine site. The S-adenosyl-L-methionine site is built by Gly-87, Asp-110, Asp-136, Leu-137, and Ile-157.

The protein belongs to the methyltransferase superfamily. METL family. Monomer. Interacts with SARS1/SerRS; interaction is mediated via tRNA(Ser) and is required for N(3)-methylcytidine methylation.

Its subcellular location is the cytoplasm. It localises to the nucleus. It catalyses the reaction cytidine(32) in tRNA(Ser) + S-adenosyl-L-methionine = N(3)-methylcytidine(32) in tRNA(Ser) + S-adenosyl-L-homocysteine + H(+). S-adenosyl-L-methionine-dependent methyltransferase that mediates N(3)-methylcytidine modification of residue 32 of the tRNA anticodon loop of tRNA(Ser), including tRNA(Ser)(UGA) and tRNA(Ser)(GCU). Interaction with SARS1/SerRS is required for N(3)-methylcytidine methylation. This Homo sapiens (Human) protein is tRNA N(3)-cytidine methyltransferase METTL6.